We begin with the raw amino-acid sequence, 401 residues long: Na(+)/H(+) antiporter NhaA 2 (401 aa).

A run of 11 helical transmembrane segments spans residues 13–33 (AAGG…ANSP), 59–79 (LLLW…GLEV), 94–114 (ITLP…IYVW), 125–145 (GWAI…TIFG), 154–174 (LFLL…IALF), 178–198 (DLST…FLLN), 209–229 (VLIG…ATLA), 260–280 (WVGF…SLFG), 292–312 (LGIA…VCWI), 332–352 (GVSL…SLAF), and 363–383 (VKAG…VLLA).

Belongs to the NhaA Na(+)/H(+) (TC 2.A.33) antiporter family.

The protein resides in the cell inner membrane. It carries out the reaction Na(+)(in) + 2 H(+)(out) = Na(+)(out) + 2 H(+)(in). Functionally, na(+)/H(+) antiporter that extrudes sodium in exchange for external protons. The sequence is that of Na(+)/H(+) antiporter NhaA 2 from Pseudoalteromonas atlantica (strain T6c / ATCC BAA-1087).